The chain runs to 97 residues: NADH dehydrogenase [ubiquinone] 1 alpha subcomplex subunit 2 (97 aa).

A disulfide bond links Cys19 and Cys53.

The protein belongs to the complex I NDUFA2 subunit family. Complex I is composed of at least 49 different subunits.

The protein resides in the mitochondrion inner membrane. Functionally, accessory subunit of the mitochondrial membrane respiratory chain NADH dehydrogenase (Complex I), that is believed not to be involved in catalysis. Complex I functions in the transfer of electrons from NADH to the respiratory chain. The immediate electron acceptor for the enzyme is believed to be ubiquinone. The sequence is that of NADH dehydrogenase [ubiquinone] 1 alpha subcomplex subunit 2 from Arabidopsis thaliana (Mouse-ear cress).